The primary structure comprises 459 residues: Ribulose bisphosphate carboxylase large chain (459 aa).

At lysine 4 the chain carries N6,N6,N6-trimethyllysine. Positions 113 and 163 each coordinate substrate. Lysine 165 acts as the Proton acceptor in catalysis. Substrate is bound at residue lysine 167. Mg(2+)-binding residues include lysine 191, aspartate 193, and glutamate 194. Lysine 191 carries the post-translational modification N6-carboxylysine. Histidine 284 (proton acceptor) is an active-site residue. 3 residues coordinate substrate: arginine 285, histidine 317, and serine 369.

Belongs to the RuBisCO large chain family. Type I subfamily. As to quaternary structure, heterohexadecamer of 8 large chains and 8 small chains; disulfide-linked. The disulfide link is formed within the large subunit homodimers. Mg(2+) is required as a cofactor. The disulfide bond which can form in the large chain dimeric partners within the hexadecamer appears to be associated with oxidative stress and protein turnover.

The protein resides in the plastid. The protein localises to the chloroplast. The enzyme catalyses 2 (2R)-3-phosphoglycerate + 2 H(+) = D-ribulose 1,5-bisphosphate + CO2 + H2O. The catalysed reaction is D-ribulose 1,5-bisphosphate + O2 = 2-phosphoglycolate + (2R)-3-phosphoglycerate + 2 H(+). In terms of biological role, ruBisCO catalyzes two reactions: the carboxylation of D-ribulose 1,5-bisphosphate, the primary event in carbon dioxide fixation, as well as the oxidative fragmentation of the pentose substrate in the photorespiration process. Both reactions occur simultaneously and in competition at the same active site. The protein is Ribulose bisphosphate carboxylase large chain of Nypa fruticans (Nypa palm).